The primary structure comprises 117 residues: Large ribosomal subunit protein bL20 (117 aa).

This sequence belongs to the bacterial ribosomal protein bL20 family.

In terms of biological role, binds directly to 23S ribosomal RNA and is necessary for the in vitro assembly process of the 50S ribosomal subunit. It is not involved in the protein synthesizing functions of that subunit. In Trichlorobacter lovleyi (strain ATCC BAA-1151 / DSM 17278 / SZ) (Geobacter lovleyi), this protein is Large ribosomal subunit protein bL20.